Reading from the N-terminus, the 258-residue chain is Type II restriction enzyme HincII (258 aa).

The catalysed reaction is Endonucleolytic cleavage of DNA to give specific double-stranded fragments with terminal 5'-phosphates.. Its function is as follows. A P subtype restriction enzyme that recognizes the double-stranded sequence 5'-GTYRAC-3' and cleaves after Y-3. This is Type II restriction enzyme HincII (hincIIR) from Haemophilus influenzae.